Consider the following 591-residue polypeptide: L-fucose isomerase (591 aa).

Catalysis depends on proton acceptor residues Glu337 and Asp361. Mn(2+) contacts are provided by Glu337, Asp361, and His528.

It belongs to the L-fucose isomerase family. Homohexamer. Mn(2+) serves as cofactor.

The protein localises to the cytoplasm. It catalyses the reaction L-fucose = L-fuculose. It functions in the pathway carbohydrate degradation; L-fucose degradation; L-lactaldehyde and glycerone phosphate from L-fucose: step 1/3. Functionally, converts the aldose L-fucose into the corresponding ketose L-fuculose. The sequence is that of L-fucose isomerase from Escherichia coli (strain SE11).